A 170-amino-acid chain; its full sequence is Peptide deformylase (170 aa).

The Fe cation site is built by cysteine 93 and histidine 135. The active site involves glutamate 136. Histidine 139 provides a ligand contact to Fe cation.

It belongs to the polypeptide deformylase family. The cofactor is Fe(2+).

It catalyses the reaction N-terminal N-formyl-L-methionyl-[peptide] + H2O = N-terminal L-methionyl-[peptide] + formate. Its function is as follows. Removes the formyl group from the N-terminal Met of newly synthesized proteins. Requires at least a dipeptide for an efficient rate of reaction. N-terminal L-methionine is a prerequisite for activity but the enzyme has broad specificity at other positions. In Acidobacterium capsulatum (strain ATCC 51196 / DSM 11244 / BCRC 80197 / JCM 7670 / NBRC 15755 / NCIMB 13165 / 161), this protein is Peptide deformylase.